Here is an 816-residue protein sequence, read N- to C-terminus: Lon protease (816 aa).

One can recognise a Lon N-terminal domain in the interval 40–244 (VPLIAVPSHP…KVLELLYEEL (205 aa)). 398–405 (GPPGVGKT) serves as a coordination point for ATP. The 181-residue stretch at 636-816 (AMSPGMVMGL…SMKEVIKLLF (181 aa)) folds into the Lon proteolytic domain. Active-site residues include Ser724 and Lys767.

This sequence belongs to the peptidase S16 family. Homohexamer. Organized in a ring with a central cavity.

The protein localises to the cytoplasm. It catalyses the reaction Hydrolysis of proteins in presence of ATP.. Functionally, ATP-dependent serine protease that mediates the selective degradation of mutant and abnormal proteins as well as certain short-lived regulatory proteins. Required for cellular homeostasis and for survival from DNA damage and developmental changes induced by stress. Degrades polypeptides processively to yield small peptide fragments that are 5 to 10 amino acids long. Binds to DNA in a double-stranded, site-specific manner. The chain is Lon protease from Borrelia duttonii (strain Ly).